A 1075-amino-acid polypeptide reads, in one-letter code: Carbamoyl phosphate synthase large chain (1075 aa).

The interval 1-403 is carboxyphosphate synthetic domain; the sequence is MPKRTDINTI…SLQKALRGLE (403 aa). The ATP site is built by arginine 129, arginine 169, glycine 175, glycine 176, glutamine 208, valine 210, glutamate 215, glycine 241, valine 242, histidine 243, glutamine 285, and glutamate 299. Residues 133–328 form the ATP-grasp 1 domain; it reads KDAMTKIGLN…IAKVAAKLAV (196 aa). Mg(2+)-binding residues include glutamine 285, glutamate 299, and asparagine 301. Residues glutamine 285, glutamate 299, and asparagine 301 each coordinate Mn(2+). The oligomerization domain stretch occupies residues 404–548; sequence IGICGFNLRS…YSTYEDECEA (145 aa). Residues 549–930 form a carbamoyl phosphate synthetic domain region; sequence KPTTRQKVMI…AYYKAQLGAG (382 aa). The 192-residue stretch at 673 to 864 folds into the ATP-grasp 2 domain; it reads QKILTDLGLK…LAKIAALVMA (192 aa). 10 residues coordinate ATP: arginine 709, histidine 748, leucine 750, glutamate 755, glycine 780, isoleucine 781, histidine 782, serine 783, glutamine 823, and glutamate 835. Residues glutamine 823, glutamate 835, and asparagine 837 each coordinate Mg(2+). Positions 823, 835, and 837 each coordinate Mn(2+). One can recognise an MGS-like domain in the interval 931-1070; it reads ERIPSTGKVF…QQLHLSSALA (140 aa). Positions 931–1075 are allosteric domain; that stretch reads ERIPSTGKVF…SSALANQITR (145 aa).

It belongs to the CarB family. As to quaternary structure, composed of two chains; the small (or glutamine) chain promotes the hydrolysis of glutamine to ammonia, which is used by the large (or ammonia) chain to synthesize carbamoyl phosphate. Tetramer of heterodimers (alpha,beta)4. Requires Mg(2+) as cofactor. It depends on Mn(2+) as a cofactor.

The enzyme catalyses hydrogencarbonate + L-glutamine + 2 ATP + H2O = carbamoyl phosphate + L-glutamate + 2 ADP + phosphate + 2 H(+). It carries out the reaction hydrogencarbonate + NH4(+) + 2 ATP = carbamoyl phosphate + 2 ADP + phosphate + 2 H(+). It functions in the pathway amino-acid biosynthesis; L-arginine biosynthesis; carbamoyl phosphate from bicarbonate: step 1/1. It participates in pyrimidine metabolism; UMP biosynthesis via de novo pathway; (S)-dihydroorotate from bicarbonate: step 1/3. Large subunit of the glutamine-dependent carbamoyl phosphate synthetase (CPSase). CPSase catalyzes the formation of carbamoyl phosphate from the ammonia moiety of glutamine, carbonate, and phosphate donated by ATP, constituting the first step of 2 biosynthetic pathways, one leading to arginine and/or urea and the other to pyrimidine nucleotides. The large subunit (synthetase) binds the substrates ammonia (free or transferred from glutamine from the small subunit), hydrogencarbonate and ATP and carries out an ATP-coupled ligase reaction, activating hydrogencarbonate by forming carboxy phosphate which reacts with ammonia to form carbamoyl phosphate. The sequence is that of Carbamoyl phosphate synthase large chain from Haemophilus ducreyi (strain 35000HP / ATCC 700724).